Reading from the N-terminus, the 1486-residue chain is Chromosome partition protein MukB (1486 aa).

Position 34–41 (glycine 34–serine 41) interacts with ATP. 3 coiled-coil regions span residues leucine 326–glutamine 418, leucine 444–glutamine 480, and arginine 509–valine 603. Residues proline 666 to arginine 783 form a flexible hinge region. Coiled coils occupy residues glutamate 835–glutamate 923, glutamate 977–alanine 1115, and valine 1209–serine 1266.

It belongs to the SMC family. MukB subfamily. In terms of assembly, homodimerization via its hinge domain. Binds to DNA via its C-terminal region. Interacts, and probably forms a ternary complex, with MukE and MukF via its C-terminal region. The complex formation is stimulated by calcium or magnesium. Interacts with tubulin-related protein FtsZ.

Its subcellular location is the cytoplasm. It is found in the nucleoid. Functionally, plays a central role in chromosome condensation, segregation and cell cycle progression. Functions as a homodimer, which is essential for chromosome partition. Involved in negative DNA supercoiling in vivo, and by this means organize and compact chromosomes. May achieve or facilitate chromosome segregation by condensation DNA from both sides of a centrally located replisome during cell division. The protein is Chromosome partition protein MukB of Escherichia coli (strain 55989 / EAEC).